We begin with the raw amino-acid sequence, 329 residues long: Interleukin-12 subunit beta (329 aa).

Residues 1–22 (MCHQWLVLSWFSLVLLASPLMA) form the signal peptide. Residues 29-106 (DVYVVELDWY…LSHSHLLLHK (78 aa)) enclose the Ig-like C2-type domain. An intrachain disulfide couples Cys50 to Cys90. 3 N-linked (GlcNAc...) asparagine glycosylation sites follow: Asn125, Asn135, and Asn223. In terms of domain architecture, Fibronectin type-III spans 238 to 329 (PPKNLQLKPL…WSEWASVSCS (92 aa)).

Belongs to the IL-12B family. In terms of assembly, heterodimer with IL12A; disulfide-linked. The heterodimer is known as interleukin IL-12. Heterodimer with IL23A; disulfide-linked. The heterodimer is known as interleukin IL-23. Also secreted as a monomer. Interacts with NBR1; this interaction promotes IL-12 secretion.

The protein resides in the secreted. In terms of biological role, cytokine that can act as a growth factor for activated T and NK cells, enhance the lytic activity of NK/lymphokine-activated killer cells, and stimulate the production of IFN-gamma by resting PBMC. Associates with IL23A to form the IL-23 interleukin, a heterodimeric cytokine which functions in innate and adaptive immunity. IL-23 may constitute with IL-17 an acute response to infection in peripheral tissues. IL-23 binds to a heterodimeric receptor complex composed of IL12RB1 and IL23R, activates the Jak-Stat signaling cascade, stimulates memory rather than naive T-cells and promotes production of pro-inflammatory cytokines. IL-23 induces autoimmune inflammation and thus may be responsible for autoimmune inflammatory diseases and may be important for tumorigenesis. The sequence is that of Interleukin-12 subunit beta (IL12B) from Equus caballus (Horse).